The primary structure comprises 469 residues: Glutamate--tRNA ligase (469 aa).

The 'HIGH' region signature appears at 9–19; it reads PSPTGFLHVGG. 4 residues coordinate Zn(2+): C98, C100, C125, and D127. The short motif at 236-240 is the 'KMSKS' region element; the sequence is KLSKR. K239 contacts ATP.

Belongs to the class-I aminoacyl-tRNA synthetase family. Glutamate--tRNA ligase type 1 subfamily. As to quaternary structure, monomer. The cofactor is Zn(2+).

Its subcellular location is the cytoplasm. It carries out the reaction tRNA(Glu) + L-glutamate + ATP = L-glutamyl-tRNA(Glu) + AMP + diphosphate. Its function is as follows. Catalyzes the attachment of glutamate to tRNA(Glu) in a two-step reaction: glutamate is first activated by ATP to form Glu-AMP and then transferred to the acceptor end of tRNA(Glu). The chain is Glutamate--tRNA ligase from Shewanella halifaxensis (strain HAW-EB4).